The sequence spans 118 residues: Putative pterin-4-alpha-carbinolamine dehydratase (118 aa).

The protein belongs to the pterin-4-alpha-carbinolamine dehydratase family.

The enzyme catalyses (4aS,6R)-4a-hydroxy-L-erythro-5,6,7,8-tetrahydrobiopterin = (6R)-L-erythro-6,7-dihydrobiopterin + H2O. The chain is Putative pterin-4-alpha-carbinolamine dehydratase from Xanthomonas oryzae pv. oryzae (strain PXO99A).